The chain runs to 333 residues: Holliday junction branch migration complex subunit RuvB (333 aa).

The segment at 1–182 (MTNRILDMEQ…FGITGHMEYY (182 aa)) is large ATPase domain (RuvB-L). ATP contacts are provided by residues L21, R22, G63, K66, T67, T68, 129–131 (EDF), R172, Y182, and R219. T67 contacts Mg(2+). The interval 183-253 (ELADLTEIVE…ITDKALTMLD (71 aa)) is small ATPAse domain (RuvB-S). Residues 256 to 333 (REGLDYVDQK…EHLGYPYTEK (78 aa)) are head domain (RuvB-H). Residues R292, R311, R313, and R316 each coordinate DNA.

The protein belongs to the RuvB family. Homohexamer. Forms an RuvA(8)-RuvB(12)-Holliday junction (HJ) complex. HJ DNA is sandwiched between 2 RuvA tetramers; dsDNA enters through RuvA and exits via RuvB. An RuvB hexamer assembles on each DNA strand where it exits the tetramer. Each RuvB hexamer is contacted by two RuvA subunits (via domain III) on 2 adjacent RuvB subunits; this complex drives branch migration. In the full resolvosome a probable DNA-RuvA(4)-RuvB(12)-RuvC(2) complex forms which resolves the HJ.

It is found in the cytoplasm. It catalyses the reaction ATP + H2O = ADP + phosphate + H(+). Its function is as follows. The RuvA-RuvB-RuvC complex processes Holliday junction (HJ) DNA during genetic recombination and DNA repair, while the RuvA-RuvB complex plays an important role in the rescue of blocked DNA replication forks via replication fork reversal (RFR). RuvA specifically binds to HJ cruciform DNA, conferring on it an open structure. The RuvB hexamer acts as an ATP-dependent pump, pulling dsDNA into and through the RuvAB complex. RuvB forms 2 homohexamers on either side of HJ DNA bound by 1 or 2 RuvA tetramers; 4 subunits per hexamer contact DNA at a time. Coordinated motions by a converter formed by DNA-disengaged RuvB subunits stimulates ATP hydrolysis and nucleotide exchange. Immobilization of the converter enables RuvB to convert the ATP-contained energy into a lever motion, pulling 2 nucleotides of DNA out of the RuvA tetramer per ATP hydrolyzed, thus driving DNA branch migration. The RuvB motors rotate together with the DNA substrate, which together with the progressing nucleotide cycle form the mechanistic basis for DNA recombination by continuous HJ branch migration. Branch migration allows RuvC to scan DNA until it finds its consensus sequence, where it cleaves and resolves cruciform DNA. This Streptococcus suis (strain 98HAH33) protein is Holliday junction branch migration complex subunit RuvB.